The primary structure comprises 863 residues: Potassium/sodium hyperpolarization-activated cyclic nucleotide-gated channel 2 (863 aa).

Gly residues predominate over residues 1–10 (MDARGGGGRP). The segment at 1–131 (MDARGGGGRP…AGPAGEPRGS (131 aa)) is disordered. Residues 1–188 (MDARGGGGRP…PYSDFRFYWD (188 aa)) are Cytoplasmic-facing. Pro residues predominate over residues 17–47 (TPAPGPPPPPPPPAPPQPQPPPAPPPNPTTP). Low complexity predominate over residues 106–128 (GAASGPSAAEEAGSEEAGPAGEP). S119 and S134 each carry phosphoserine. The interval 131 to 182 (SQASFLQRQFGALLQPGVNKFSLRMFGSQKAVEREQERVKSAGAWIIHPYSD) is involved in subunit assembly. The helical transmembrane segment at 189–209 (FTMLLFMVGNLIIIPVGITFF) threads the bilayer. Topologically, residues 210 to 213 (KDET) are extracellular. A helical transmembrane segment spans residues 214-234 (TAPWIVFNVVSDTFFLMDLVL). Over 235-261 (NFRTGIVIEDNTEIILDPEKIKKKYLR) the chain is Cytoplasmic. A helical membrane pass occupies residues 262-282 (TWFVVDFVSSIPVDYIFLIVE). The Extracellular segment spans residues 283–290 (KGIDSEVY). The chain crosses the membrane as a helical; Voltage-sensor span at residues 291-311 (KTARALRIVRFTKILSLLRLL). The Cytoplasmic portion of the chain corresponds to 312 to 342 (RLSRLIRYIHQWEEIFHMTYDLASAVMRICN). The chain crosses the membrane as a helical span at residues 343–363 (LISMMLLLCHWDGCLQFLVPM). Over 364 to 386 (LQDFPSDCWVSINNMVNHSWSEL) the chain is Extracellular. N380 carries N-linked (GlcNAc...) asparagine glycosylation. Residues 387–408 (YSFALFKAMSHMLCIGYGRQAP) constitute an intramembrane region (pore-forming). At 409–413 (ESMTD) the chain is on the extracellular side. The chain crosses the membrane as a helical span at residues 414-434 (IWLTMLSMIVGATCYAMFIGH). Over 435–863 (ATALIQSLDS…SARSRLSSNL (429 aa)) the chain is Cytoplasmic. 3',5'-cyclic AMP contacts are provided by G581, E582, C584, R591, T592, and R632. Position 641 is a phosphoserine; by PKG/PRKG2 (S641). At S726 the chain carries Phosphoserine. Residue R728 is modified to Omega-N-methylarginine. The disordered stretch occupies residues 730 to 863 (VRRAPPGPLP…SARSRLSSNL (134 aa)). Over residues 734–755 (PPGPLPPAASPGPPAASPPAAP) the composition is skewed to pro residues. 3 positions are modified to phosphoserine: S743, S750, and S757. 3 stretches are compositionally biased toward low complexity: residues 756–765 (SSPRAPRTSP), 778–800 (PALP…PSLP), and 808–834 (PAAS…AAPS). A phosphoserine mark is found at S840, S842, and S847.

The protein belongs to the potassium channel HCN family. Homotetramer. The channel is composed of a homo- or heterotetrameric complex of pore-forming subunits. Heterotetramer with HCN1. Forms an obligate 4:4 complex with accessory subunit PEX5L; regulates HCN2 cell-surface expression and cyclic nucleotide dependence. Interacts with KCNE2. In terms of processing, S-palmitoylated. N-glycosylated; required for cell surface trafficking of HCN2. Post-translationally, phosphorylation at Ser-641 by PRKG2 shifts the voltage-dependence to more negative voltages, hence counteracting the stimulatory effect of cGMP on gating. In terms of tissue distribution, highly expressed in brain. Detected at low levels in heart, in ventricle, atrium and in sinoatrial node (SAN).

It localises to the cell membrane. It carries out the reaction Na(+)(in) = Na(+)(out). The enzyme catalyses K(+)(in) = K(+)(out). It catalyses the reaction NH4(+)(in) = NH4(+)(out). Activated by cAMP, and at 10-100 times higher concentrations, also by cGMP. cAMP binding causes a conformation change that leads to the assembly of an active tetramer and channel opening. In the absence of cAMP, the C-terminal region is thought to exert a tonic inhibition on the pore when HCN2 is in a non-tetrameric form. Channel activity is modulated by intracellular chloride ions and pH; acidic pH shifts the activation to more negative voltages. Phosphatidylinositol-4,5- bisphosphate (PIP(2)) acts as a ligand that allosterically opens HCN2 by shifting voltage-dependent channel activation toward depolarized potentials. Inhibited by extracellular cesium ions. Its function is as follows. Hyperpolarization-activated ion channel exhibiting weak selectivity for potassium over sodium ions. Contributes to the native pacemaker currents in heart (If) and in neurons (Ih). Can also transport ammonium in the distal nephron. Involved in the initiation of neuropathic pain in sensory neurons. The sequence is that of Potassium/sodium hyperpolarization-activated cyclic nucleotide-gated channel 2 from Mus musculus (Mouse).